The following is a 555-amino-acid chain: Carboxypeptidase Y homolog A (555 aa).

An N-terminal signal peptide occupies residues 1–17; the sequence is MRGLATTLLIGAAAAAT. The propeptide occupies 18–136; that stretch reads YPAQQVLKAP…RLETFDLRVK (119 aa). Disulfide bonds link C191–C430, C325–C339, C349–C372, C356–C365, and C394–C400. N222 is a glycosylation site (N-linked (GlcNAc...) asparagine). The active site involves S278. Residue D469 is part of the active site. An N-linked (GlcNAc...) asparagine glycan is attached at N520. Residue H531 is part of the active site.

This sequence belongs to the peptidase S10 family.

It localises to the vacuole. The catalysed reaction is Release of a C-terminal amino acid with broad specificity.. Vacuolar carboxypeptidase involved in degradation of small peptides. Digests preferentially peptides containing an aliphatic or hydrophobic residue in P1' position, as well as methionine, leucine or phenylalanine in P1 position of ester substrate. The chain is Carboxypeptidase Y homolog A (cpyA) from Talaromyces marneffei (strain ATCC 18224 / CBS 334.59 / QM 7333) (Penicillium marneffei).